Reading from the N-terminus, the 205-residue chain is Methylthioribulose-1-phosphate dehydratase (205 aa).

The Zn(2+) site is built by H96 and H98.

This sequence belongs to the aldolase class II family. MtnB subfamily. It depends on Zn(2+) as a cofactor.

It carries out the reaction 5-(methylsulfanyl)-D-ribulose 1-phosphate = 5-methylsulfanyl-2,3-dioxopentyl phosphate + H2O. It participates in amino-acid biosynthesis; L-methionine biosynthesis via salvage pathway; L-methionine from S-methyl-5-thio-alpha-D-ribose 1-phosphate: step 2/6. In terms of biological role, catalyzes the dehydration of methylthioribulose-1-phosphate (MTRu-1-P) into 2,3-diketo-5-methylthiopentyl-1-phosphate (DK-MTP-1-P). In Pseudomonas aeruginosa (strain LESB58), this protein is Methylthioribulose-1-phosphate dehydratase.